The chain runs to 424 residues: Serine--tRNA ligase (424 aa).

233-235 (TAE) is a binding site for L-serine. Residues 264–266 (RRE) and Val280 each bind ATP. Glu287 serves as a coordination point for L-serine. 351–354 (EISS) lines the ATP pocket. Position 386 (Ser386) interacts with L-serine.

It belongs to the class-II aminoacyl-tRNA synthetase family. Type-1 seryl-tRNA synthetase subfamily. In terms of assembly, homodimer. The tRNA molecule binds across the dimer.

Its subcellular location is the cytoplasm. It carries out the reaction tRNA(Ser) + L-serine + ATP = L-seryl-tRNA(Ser) + AMP + diphosphate + H(+). The enzyme catalyses tRNA(Sec) + L-serine + ATP = L-seryl-tRNA(Sec) + AMP + diphosphate + H(+). Its pathway is aminoacyl-tRNA biosynthesis; selenocysteinyl-tRNA(Sec) biosynthesis; L-seryl-tRNA(Sec) from L-serine and tRNA(Sec): step 1/1. Its function is as follows. Catalyzes the attachment of serine to tRNA(Ser). Is also able to aminoacylate tRNA(Sec) with serine, to form the misacylated tRNA L-seryl-tRNA(Sec), which will be further converted into selenocysteinyl-tRNA(Sec). The protein is Serine--tRNA ligase of Kosmotoga olearia (strain ATCC BAA-1733 / DSM 21960 / TBF 19.5.1).